The following is a 387-amino-acid chain: ATP phosphoribosyltransferase regulatory subunit (387 aa).

It belongs to the class-II aminoacyl-tRNA synthetase family. HisZ subfamily. As to quaternary structure, heteromultimer composed of HisG and HisZ subunits.

The protein localises to the cytoplasm. It functions in the pathway amino-acid biosynthesis; L-histidine biosynthesis; L-histidine from 5-phospho-alpha-D-ribose 1-diphosphate: step 1/9. Required for the first step of histidine biosynthesis. May allow the feedback regulation of ATP phosphoribosyltransferase activity by histidine. The sequence is that of ATP phosphoribosyltransferase regulatory subunit from Polynucleobacter necessarius subsp. necessarius (strain STIR1).